The primary structure comprises 260 residues: Putative enoyl-CoA hydratase/isomerase YngF (260 aa).

It belongs to the enoyl-CoA hydratase/isomerase family.

This is Putative enoyl-CoA hydratase/isomerase YngF (yngF) from Bacillus subtilis (strain 168).